The following is a 322-amino-acid chain: Secreted RxLR effector protein RXLR-C17 (322 aa).

The signal sequence occupies residues Met-1 to Ala-25. A RxLR-dEER motif is present at residues Arg-43–Arg-62. The N-linked (GlcNAc...) asparagine glycan is linked to Asn-73.

It belongs to the RxLR effector family.

It is found in the secreted. The protein localises to the host cytoplasm. The protein resides in the host nucleus. Its function is as follows. Secreted effector that suppresses pattern-triggered immunity (PTI) in plant host. The chain is Secreted RxLR effector protein RXLR-C17 from Plasmopara halstedii (Downy mildew of sunflower).